The chain runs to 141 residues: MAMTIDVRVVSAEGSIYAGVADMVVAPGEMGELGILPRHAPLLTGLRPGELRIIHGAETEYLFVNGGILEIQPDMVTVLADSAERATDIDEAKALAAKQAAEARMAGHTDQMEYAAAQAELLEQIARLKTVQRLREQGFVR.

Belongs to the ATPase epsilon chain family. In terms of assembly, F-type ATPases have 2 components, CF(1) - the catalytic core - and CF(0) - the membrane proton channel. CF(1) has five subunits: alpha(3), beta(3), gamma(1), delta(1), epsilon(1). CF(0) has three main subunits: a, b and c.

The protein resides in the cell inner membrane. Its function is as follows. Produces ATP from ADP in the presence of a proton gradient across the membrane. The protein is ATP synthase epsilon chain (atpC) of Acidithiobacillus ferridurans.